We begin with the raw amino-acid sequence, 61 residues long: UPF0181 protein MS1074 (61 aa).

This sequence belongs to the UPF0181 family.

The sequence is that of UPF0181 protein MS1074 from Mannheimia succiniciproducens (strain KCTC 0769BP / MBEL55E).